The sequence spans 198 residues: Penicillin-binding protein activator LpoB (198 aa).

The N-terminal stretch at 1-19 (MIRSVNRTGALMMALILSG) is a signal peptide. C20 carries N-palmitoyl cysteine lipidation. Residue C20 is the site of S-diacylglycerol cysteine attachment. The segment covering 26-37 (QPAPVEPTQPVE) has biased composition (low complexity). Residues 26-59 (QPAPVEPTQPVEPVQPVPQPEQPIPQPQPVPQPP) are disordered. The span at 38-59 (PVQPVPQPEQPIPQPQPVPQPP) shows a compositional bias: pro residues.

The protein belongs to the LpoB family. As to quaternary structure, interacts with PBP1b.

The protein resides in the cell outer membrane. Its function is as follows. Regulator of peptidoglycan synthesis that is essential for the function of penicillin-binding protein 1B (PBP1b). The protein is Penicillin-binding protein activator LpoB of Pantoea ananatis (strain LMG 20103).